A 378-amino-acid polypeptide reads, in one-letter code: Fetuin-B (378 aa).

The signal sequence occupies residues 1 to 18; sequence MGVLRLLVLCTLAACCVA. Cystatin fetuin-B-type domains are found at residues 28–141 and 152–261; these read NAPF…YNCT and SMCP…VSCE. Asn40 carries N-linked (GlcNAc...) asparagine glycosylation. 5 disulfide bridges follow: Cys96–Cys107, Cys120–Cys140, Cys154–Cys157, Cys217–Cys224, and Cys237–Cys260. N-linked (GlcNAc...) asparagine glycosylation is present at Asn139. Disordered regions lie at residues 266 to 338 and 357 to 378; these read QDQV…PQGD and LPFP…QRTP. Residues 286–297 show a composition bias toward polar residues; the sequence is QKNTAPTSSPSI. 2 O-linked (GalNAc...) threonine glycosylation sites follow: Thr289 and Thr292. Phosphoserine is present on Ser316. A compositionally biased stretch (basic and acidic residues) spans 362 to 378; sequence KEQRSPECPGPEKQRTP.

Belongs to the fetuin family. In terms of tissue distribution, liver.

It is found in the secreted. Functionally, protease inhibitor required for egg fertilization. Required to prevent premature zona pellucida hardening before fertilization, probably by inhibiting the protease activity of ASTL, a protease that mediates the cleavage of ZP2 and triggers zona pellucida hardening. The chain is Fetuin-B (Fetub) from Rattus norvegicus (Rat).